The sequence spans 347 residues: MSVAGLKKQFHKASQLFSEKISGAEGTKLDDEFLDMERKIDVTNKVVAEILSKTTEYLQPNPAYRAKLGMLNTVSKIRGQVKTTGYPQTEGLLGDCMLKYGKELGEDSTFGNALIEVGESMKLMAEVKDSLDINVKQTFIDPLQLLQDKDLKEIGHHLKKLEGRRLDYDYKKKRVGKIPDEEVRQAVEKFEESKELAERSMFNFLENDVEQVSQLAVFIEAALDYHRQSTEILQELQSKLQMRISAASSVPRREYKPRPVKRSSSELNGVSTTSVVKTTGSNIPMDQPCCRGLYDFEPENQGELGFKEGDIITLTNQIDENWYEGMIHGESGFFPINYVEVIVPLPQ.

The interval 1-21 (MSVAGLKKQFHKASQLFSEKI) is membrane-binding amphipathic helix. The 232-residue stretch at 18-249 (SEKISGAEGT…LQMRISAASS (232 aa)) folds into the BAR domain. Residues 60–87 (PNPAYRAKLGMLNTVSKIRGQVKTTGYP) form a required for dimerization upon membrane association region. Residues 181–201 (EEVRQAVEKFEESKELAERSM) adopt a coiled-coil conformation. Positions 218 to 254 (FIEAALDYHRQSTEILQELQSKLQMRISAASSVPRRE) are interaction with ARC. The interval 248-271 (SSVPRREYKPRPVKRSSSELNGVS) is disordered. Ser265 bears the Phosphoserine mark. Residues 285–344 (MDQPCCRGLYDFEPENQGELGFKEGDIITLTNQIDENWYEGMIHGESGFFPINYVEVIVP) form the SH3 domain.

The protein belongs to the endophilin family. As to quaternary structure, interacts with ARC. Interacts with DNM1, SGIP1 and SYNJ1. Interacts with the huntingtin exon 1 protein (HDEX1P) containing a glutamine repeat in the pathological range and promotes formation of insoluble polyglutamine-containing aggregates in vivo. Interacts with DYDC1. Interacts with FASLG. Interacts with ATXN2. Interacts with BIN2. Brain and testis.

It is found in the cytoplasm. The protein resides in the early endosome membrane. Functionally, implicated in endocytosis. May recruit other proteins to membranes with high curvature. In Homo sapiens (Human), this protein is Endophilin-A3 (SH3GL3).